A 105-amino-acid polypeptide reads, in one-letter code: uncharacterized protein (105 aa).

This is an uncharacterized protein from Rickettsia prowazekii (strain Madrid E).